The sequence spans 412 residues: Cellobiose 2-epimerase (412 aa).

The protein belongs to the cellobiose 2-epimerase family.

The catalysed reaction is D-cellobiose = beta-D-glucosyl-(1-&gt;4)-D-mannopyranose. Functionally, catalyzes the reversible epimerization of cellobiose to 4-O-beta-D-glucopyranosyl-D-mannose (Glc-Man). Can also use lactose, epilactose, mannobiose and cellotriose. Highly specific for oligosaccharides linked by the beta-1,4-glycosidic linkage. Shows preference for lactose. In Rhodothermus marinus (Rhodothermus obamensis), this protein is Cellobiose 2-epimerase (ce).